Reading from the N-terminus, the 515-residue chain is Cytochrome P450 monooxygenase janP (515 aa).

Residues 20 to 36 (GFLWKYAAFMVFIYLLL) form a helical membrane-spanning segment. Residue Cys-456 coordinates heme. Residue Asn-501 is glycosylated (N-linked (GlcNAc...) asparagine).

This sequence belongs to the cytochrome P450 family. Heme serves as cofactor.

Its subcellular location is the membrane. It functions in the pathway secondary metabolite biosynthesis. In terms of biological role, cytochrome P450 monooxygenase; part of the gene cluster that mediates the biosynthesis of the indole diterpenes janthitremanes such as shearinine K or shearinine A. The geranylgeranyl diphosphate (GGPP) synthase janG catalyzes the first step in janthitremane biosynthesis via conversion of farnesyl pyrophosphate and isopentyl pyrophosphate into geranylgeranyl pyrophosphate (GGPP). Condensation of indole-3-glycerol phosphate with GGPP by the prenyl transferase janC then forms 3-geranylgeranylindole (3-GGI). Epoxidation by the FAD-dependent monooxygenase janM leads to a epoxidized-GGI that is substrate of the terpene cyclase janB for cyclization to yield paspaline. Paspaline is subsequently converted to 13-desoxypaspaline by the cytochrome P450 monooxygenase janP, via beta-PC-M6 in a series of alpha-face oxidations. The cytochrome P450 monooxygenase janQ is proposed to carry out sequential beta-face oxidation steps at C-7 and C-13 of 13-desoxypaspaline to form paspalicine and paspalinine respectively. The indole diterpene prenyltransferase janD may then convert paspalinine into shearinine K which is substrate of janO and/or additional enzymes for oxidation and cyclization to generate shearinine A. The sequence is that of Cytochrome P450 monooxygenase janP from Penicillium janthinellum (Penicillium vitale).